A 799-amino-acid chain; its full sequence is Oxygen sensor protein DosP (799 aa).

Residues 10–81 (ADGIFFPALE…YIRHNREGGK (72 aa)) enclose the PAS 1 domain. 2 residues coordinate heme: H69 and M87. The region spanning 134-207 (QTRQLIIAVD…LQQLLWKTAR (74 aa)) is the PAS 2 domain. Residues 208 to 260 (DQDEFLLLTRTGEKIWIKASISPVYDVLAHLQNLVMTFSDITEERQIRQLEGN) form the PAC domain. Residues 402–532 (VSPVVYLIGV…GGNGWQFFSP (131 aa)) form the GGDEF domain. An EAL domain is found at 541 to 795 (RLVLGAALKE…EIPGWMSSVL (255 aa)).

In terms of assembly, homodimer; has been previously suggested to be a homotetramer based on size exclusion chromatography. Forms a complex with DosC. Heme is required as a cofactor. Requires Mg(2+) as cofactor. The heme distal ligand is coordinated by Met-87 in the active Fe(2+) (ferrous) form, by O(2) in the O(2)-bound form and by H(2)O in the inactive Fe(3+) (ferric) form.

It carries out the reaction 3',3'-c-di-GMP + H2O = 5'-phosphoguanylyl(3'-&gt;5')guanosine + H(+). Its activity is regulated as follows. Has c-di-GMP PDE activity in both Fe(2+) and Fe(3+)-bound forms; this activity is increased 6-7 fold by binding of O(2) and CO and NO. Has cAMP PDE activity only when the heme is in the Fe(2+) form. cAMP PDE activity is inhibited by oxidation of the heme iron and by binding of external ligands such as CO and NO. Also strongly inhibited by etazolate hydrochloride, a selective cAMP PDE inhibitor. PDE activity is inhibited in the absence of oxygen. Heme-based oxygen sensor protein displaying phosphodiesterase (PDE) activity toward c-di-GMP in response to oxygen availability. Involved in the modulation of intracellular c-di-GMP levels, in association with DosC which catalyzes the biosynthesis of c-di-GMP (diguanylate cyclase activity). Cyclic-di-GMP is a second messenger which controls cell surface-associated traits in bacteria. Has very poor PDE activity on cAMP but is not active with cGMP, bis(p-nitrophenyl) phosphate or p-nitrophenyl phosphate. Via its PDE activity on c-di-GMP, DosP regulates biofilm formation through the repression of transcription of the csgBAC operon, which encodes curli structural subunits. The polypeptide is Oxygen sensor protein DosP (dosP) (Escherichia coli (strain K12)).